We begin with the raw amino-acid sequence, 348 residues long: MDTEADLFYRQLPKVELHAHLNGSVSFETMEKLIKRKPHLNIEHSMTAIRRGQRRTLDECFQVFKVIHQLVDSEEDILMVAKSVIQEFAADGVKYLELRSTPREVTETGLSKQRYIETVLEAIRQCKQEGVDIDVRFLVAVDRRHGPEVAMQTVKLAEDFLLSSDGTVVGLDLSGDPTVGHGKDLLAALQKAKNCGLKLALHLSEVPSQIDETELLLNLPPDRIGHGTFLHPDVGGSDSLVDKVCKQNIPIEICLTSNVKGQTVPSYDKHHFKYWYNRGHPCVLCTDDKGVFCTDLSQEYQLAASTFGLTKEAVWILSQQAIGYTFAPEPIKQRLEKTWAELKQQILQ.

2 residues coordinate Zn(2+): His-18 and His-20. Residues His-20, Asn-22, His-68, 100–103 (STPR), Asp-142, and Gly-175 contribute to the N(6)-methyl-AMP site. Residue His-202 coordinates Zn(2+). The N(6)-methyl-AMP site is built by Glu-205, Asp-287, and Asp-288. Catalysis depends on Glu-205, which acts as the Proton donor. Asp-287 provides a ligand contact to Zn(2+).

This sequence belongs to the metallo-dependent hydrolases superfamily. Adenosine and AMP deaminases family. In terms of assembly, monomer. Zn(2+) serves as cofactor.

It catalyses the reaction N(6)-methyl-AMP + H2O + H(+) = IMP + methylamine. Functionally, catalyzes the hydrolysis of the free cytosolic methylated adenosine nucleotide N(6)-methyl-AMP (N6-mAMP) to produce inositol monophosphate (IMP) and methylamine. Is required for the catabolism of cytosolic N6-mAMP, which is derived from the degradation of mRNA containing N6-methylated adenine (m6A). The polypeptide is N6-Methyl-AMP deaminase (mapda) (Danio rerio (Zebrafish)).